The sequence spans 279 residues: NADPH-dependent 7-cyano-7-deazaguanine reductase (279 aa).

86 to 88 serves as a coordination point for substrate; that stretch reads VES. Position 88–89 (88–89) interacts with NADPH; the sequence is SK. Cys-187 acts as the Thioimide intermediate in catalysis. The active-site Proton donor is Asp-194. Position 226-227 (226-227) interacts with substrate; the sequence is HE. 255 to 256 contacts NADPH; it reads RG.

Belongs to the GTP cyclohydrolase I family. QueF type 2 subfamily. In terms of assembly, homodimer.

The protein resides in the cytoplasm. It catalyses the reaction 7-aminomethyl-7-carbaguanine + 2 NADP(+) = 7-cyano-7-deazaguanine + 2 NADPH + 3 H(+). It functions in the pathway tRNA modification; tRNA-queuosine biosynthesis. Catalyzes the NADPH-dependent reduction of 7-cyano-7-deazaguanine (preQ0) to 7-aminomethyl-7-deazaguanine (preQ1). In Actinobacillus succinogenes (strain ATCC 55618 / DSM 22257 / CCUG 43843 / 130Z), this protein is NADPH-dependent 7-cyano-7-deazaguanine reductase.